Reading from the N-terminus, the 147-residue chain is Large ribosomal subunit protein uL15 (147 aa).

Positions 1–58 (MRLHDLKPAEGSTKKKKRVGRGIGSGHGKTSGRGHKGQNARSGGGVRPGFEGGQMPLT) are disordered. Gly residues predominate over residues 42 to 52 (SGGGVRPGFEG).

Belongs to the universal ribosomal protein uL15 family. Part of the 50S ribosomal subunit.

Its function is as follows. Binds to the 23S rRNA. The protein is Large ribosomal subunit protein uL15 of Caldanaerobacter subterraneus subsp. tengcongensis (strain DSM 15242 / JCM 11007 / NBRC 100824 / MB4) (Thermoanaerobacter tengcongensis).